Here is a 298-residue protein sequence, read N- to C-terminus: Proline iminopeptidase (298 aa).

An AB hydrolase-1 domain is found at 26-277 (VLLLHGGPAM…NGSHLAMWDD (252 aa)). The Nucleophile role is filled by serine 103. Aspartate 244 is a catalytic residue. Catalysis depends on histidine 271, which acts as the Proton donor.

This sequence belongs to the peptidase S33 family. Monomer.

It carries out the reaction Release of N-terminal proline from a peptide.. Its function is as follows. Releases the N-terminal proline from various substrates. Cleaves specifically Pro-betaNA and small peptides containing proline at the amino terminal. No activity against hydroxyproline-betaNA. This chain is Proline iminopeptidase (fpaP), found in Elizabethkingia meningoseptica (Chryseobacterium meningosepticum).